The sequence spans 463 residues: MVAGEIIKGVAAEITNGSSSSVVQKYLDCANQVAPDPGNTTWVLLSTILVLGMMPALAFFEAGLLRSKNTLSIITQIMSGIVVLTVMWQAFGYSLTFGPDQKGIIGNLDHAFLINVSYDDCSPNAPNIPAAAYAFFMMMFANITPLLMTGAFAERVKFKAFIALTVAWEIIVFYPVAHWIWGGGWLHKYFGVLDFAGGIVIHTSAGVSALVIALYVGRRKDFEKYGGEFPPSNLPLATIGAALLWMGWFGFNAGSALAAGNIATSAVASTQIGGSFSAIVWIILSAAKGKPNTVSVINGVIAGLAGITPASGYINSQYSIGLGICLGLASYYSVVLLKHKLHIDDALDVSSVHGLTGIIGSLAIGFCAELSVNPNGANGAFYGNPKLIGTQLLGVVSVAVWAAAWTWVLLKIIDATIGVKIDESEEELGLDLVEHGEFAYHNISLQGNENHYSSVINSHDFFK.

The Extracellular segment spans residues 1–39; the sequence is MVAGEIIKGVAAEITNGSSSSVVQKYLDCANQVAPDPGN. A helical membrane pass occupies residues 40–60; it reads TTWVLLSTILVLGMMPALAFF. Topologically, residues 61–76 are cytoplasmic; sequence EAGLLRSKNTLSIITQ. The chain crosses the membrane as a helical span at residues 77-97; sequence IMSGIVVLTVMWQAFGYSLTF. Over 98-127 the chain is Extracellular; it reads GPDQKGIIGNLDHAFLINVSYDDCSPNAPN. A helical membrane pass occupies residues 128 to 148; sequence IPAAAYAFFMMMFANITPLLM. The Cytoplasmic portion of the chain corresponds to 149-160; sequence TGAFAERVKFKA. Residues 161–181 traverse the membrane as a helical segment; sequence FIALTVAWEIIVFYPVAHWIW. Residues 182 to 194 lie on the Extracellular side of the membrane; it reads GGGWLHKYFGVLD. A helical transmembrane segment spans residues 195–215; the sequence is FAGGIVIHTSAGVSALVIALY. Over 216 to 233 the chain is Cytoplasmic; it reads VGRRKDFEKYGGEFPPSN. Residues 234-254 form a helical membrane-spanning segment; sequence LPLATIGAALLWMGWFGFNAG. Over 255-265 the chain is Extracellular; the sequence is SALAAGNIATS. A helical transmembrane segment spans residues 266–286; the sequence is AVASTQIGGSFSAIVWIILSA. The Cytoplasmic portion of the chain corresponds to 287 to 293; the sequence is AKGKPNT. A helical transmembrane segment spans residues 294 to 314; sequence VSVINGVIAGLAGITPASGYI. Topologically, residues 315–316 are extracellular; the sequence is NS. Residues 317–337 traverse the membrane as a helical segment; that stretch reads QYSIGLGICLGLASYYSVVLL. Residues 338–351 lie on the Cytoplasmic side of the membrane; sequence KHKLHIDDALDVSS. The helical transmembrane segment at 352–372 threads the bilayer; it reads VHGLTGIIGSLAIGFCAELSV. At 373–392 the chain is on the extracellular side; sequence NPNGANGAFYGNPKLIGTQL. Residues 393-413 form a helical membrane-spanning segment; it reads LGVVSVAVWAAAWTWVLLKII. The Cytoplasmic segment spans residues 414 to 463; that stretch reads DATIGVKIDESEEELGLDLVEHGEFAYHNISLQGNENHYSSVINSHDFFK.

Belongs to the ammonia transporter channel (TC 1.A.11.2) family.

It localises to the cell membrane. The protein resides in the endosome membrane. Its subcellular location is the lysosome membrane. The protein localises to the cytoplasmic vesicle. It is found in the phagosome membrane. Its function is as follows. Ammonium transporter that mediates the excretion of ammonium. Controls ammonium homeostasis during growth and development. Ammonium has been shown to function as a morphogen at multiple steps during the development. The polypeptide is Ammonium transporter 1 (amtA) (Dictyostelium discoideum (Social amoeba)).